We begin with the raw amino-acid sequence, 213 residues long: Large ribosomal subunit protein uL1 (213 aa).

It belongs to the universal ribosomal protein uL1 family. As to quaternary structure, part of the 50S ribosomal subunit.

Its function is as follows. Binds directly to 23S rRNA. Probably involved in E site tRNA release. Protein L1 is also a translational repressor protein, it controls the translation of its operon by binding to its mRNA. The protein is Large ribosomal subunit protein uL1 of Methanococcoides burtonii (strain DSM 6242 / NBRC 107633 / OCM 468 / ACE-M).